An 821-amino-acid chain; its full sequence is Glycerol-3-phosphate acyltransferase (821 aa).

Positions 310-315 (CHRSHM) match the HXXXXD motif motif.

It belongs to the GPAT/DAPAT family.

It localises to the cell membrane. The enzyme catalyses sn-glycerol 3-phosphate + an acyl-CoA = a 1-acyl-sn-glycero-3-phosphate + CoA. Its pathway is phospholipid metabolism; CDP-diacylglycerol biosynthesis; CDP-diacylglycerol from sn-glycerol 3-phosphate: step 1/3. The sequence is that of Glycerol-3-phosphate acyltransferase from Baumannia cicadellinicola subsp. Homalodisca coagulata.